The sequence spans 242 residues: ATP synthase subunit a (242 aa).

Helical transmembrane passes span 29-49 (SAVA…TAFV), 84-104 (FFPL…LGMV), 114-134 (IIVT…YGIY), 140-160 (FFSL…MVII), 181-201 (VAGH…TWLF), and 206-226 (IALV…QAYI).

This sequence belongs to the ATPase A chain family. As to quaternary structure, F-type ATPases have 2 components, CF(1) - the catalytic core - and CF(0) - the membrane proton channel. CF(1) has five subunits: alpha(3), beta(3), gamma(1), delta(1), epsilon(1). CF(0) has three main subunits: a(1), b(2) and c(9-12). The alpha and beta chains form an alternating ring which encloses part of the gamma chain. CF(1) is attached to CF(0) by a central stalk formed by the gamma and epsilon chains, while a peripheral stalk is formed by the delta and b chains.

It is found in the cell inner membrane. Key component of the proton channel; it plays a direct role in the translocation of protons across the membrane. The sequence is that of ATP synthase subunit a from Orientia tsutsugamushi (strain Ikeda) (Rickettsia tsutsugamushi).